Reading from the N-terminus, the 312-residue chain is Tyrosine recombinase XerC (312 aa).

The 103-residue stretch at 1 to 103 (MISAFYAFLD…AIKSFSQYCI (103 aa)) folds into the Core-binding (CB) domain. The region spanning 124–306 (ELPSPITYEQ…SMKLKKQTHE (183 aa)) is the Tyr recombinase domain. Active-site residues include arginine 164, lysine 188, histidine 258, arginine 261, and histidine 284. The active-site O-(3'-phospho-DNA)-tyrosine intermediate is the tyrosine 293.

This sequence belongs to the 'phage' integrase family. XerC subfamily. Forms a cyclic heterotetrameric complex composed of two molecules of XerC and two molecules of XerD.

The protein resides in the cytoplasm. In terms of biological role, site-specific tyrosine recombinase, which acts by catalyzing the cutting and rejoining of the recombining DNA molecules. The XerC-XerD complex is essential to convert dimers of the bacterial chromosome into monomers to permit their segregation at cell division. It also contributes to the segregational stability of plasmids. The polypeptide is Tyrosine recombinase XerC (Chlamydia caviae (strain ATCC VR-813 / DSM 19441 / 03DC25 / GPIC) (Chlamydophila caviae)).